We begin with the raw amino-acid sequence, 230 residues long: Large ribosomal subunit protein uL4 (230 aa).

A disordered region spans residues 59 to 113 (RQGTHATKTRGEVSGGGKKPYRQKGTGRARQGSTRAPQFTGGGTVHGPQPRDYSQ).

The protein belongs to the universal ribosomal protein uL4 family. Part of the 50S ribosomal subunit.

One of the primary rRNA binding proteins, this protein initially binds near the 5'-end of the 23S rRNA. It is important during the early stages of 50S assembly. It makes multiple contacts with different domains of the 23S rRNA in the assembled 50S subunit and ribosome. In terms of biological role, forms part of the polypeptide exit tunnel. This Nocardia farcinica (strain IFM 10152) protein is Large ribosomal subunit protein uL4.